Consider the following 734-residue polypeptide: Photosystem I P700 chlorophyll a apoprotein A2 (734 aa).

8 helical membrane-spanning segments follow: residues 46–69 (IFAS…FHVA), 135–158 (LYTG…LHLQ), 175–199 (LNHH…HVAI), 273–291 (MAHH…GHMY), 330–353 (LHFQ…QHMY), 369–395 (AALY…IFFL), 417–439 (AIIS…LYVH), and 517–535 (FLVH…LILV). Residues Cys559 and Cys568 each contribute to the [4Fe-4S] cluster site. Transmembrane regions (helical) follow at residues 575–596 (AFYL…YWHW) and 643–665 (LSVW…MFLI). Positions 654, 662, and 670 each coordinate chlorophyll a. Trp671 is a binding site for phylloquinone. A helical transmembrane segment spans residues 707–727 (LVGLAHFSVGYIFTYAAFLIA).

Belongs to the PsaA/PsaB family. The PsaA/B heterodimer binds the P700 chlorophyll special pair and subsequent electron acceptors. PSI consists of a core antenna complex that captures photons, and an electron transfer chain that converts photonic excitation into a charge separation. The eukaryotic PSI reaction center is composed of at least 11 subunits. Requires P700 is a chlorophyll a/chlorophyll a' dimer, A0 is one or more chlorophyll a, A1 is one or both phylloquinones and FX is a shared 4Fe-4S iron-sulfur center. as cofactor.

Its subcellular location is the plastid. The protein localises to the chloroplast thylakoid membrane. The catalysed reaction is reduced [plastocyanin] + hnu + oxidized [2Fe-2S]-[ferredoxin] = oxidized [plastocyanin] + reduced [2Fe-2S]-[ferredoxin]. PsaA and PsaB bind P700, the primary electron donor of photosystem I (PSI), as well as the electron acceptors A0, A1 and FX. PSI is a plastocyanin-ferredoxin oxidoreductase, converting photonic excitation into a charge separation, which transfers an electron from the donor P700 chlorophyll pair to the spectroscopically characterized acceptors A0, A1, FX, FA and FB in turn. Oxidized P700 is reduced on the lumenal side of the thylakoid membrane by plastocyanin. The chain is Photosystem I P700 chlorophyll a apoprotein A2 from Adiantum capillus-veneris (Maidenhair fern).